A 151-amino-acid chain; its full sequence is MLKGFKEFLARGNIVDLAVAVVIGTAFTALVTKFTDSIITPLINRIGVNAQSDVGILRIGIGGGQTIDLNVLLSAAINFFLIAFAVYFLVVLPYNTLRKKGEVEQPGDTQVVLLTEIRDLLAQTNGDSPGRHGGRGTPSPTDGPLASTESQ.

Helical transmembrane passes span 12–32 and 71–91; these read GNIV…ALVT and VLLS…FLVV. The segment at 122–151 is disordered; sequence AQTNGDSPGRHGGRGTPSPTDGPLASTESQ.

The protein belongs to the MscL family. As to quaternary structure, homopentamer.

It is found in the cell membrane. In terms of biological role, channel that opens in response to stretch forces in the membrane lipid bilayer. May participate in the regulation of osmotic pressure changes within the cell. The protein is Large-conductance mechanosensitive channel of Mycobacterium bovis (strain BCG / Pasteur 1173P2).